Consider the following 180-residue polypeptide: NADH-quinone oxidoreductase subunit I 1 (180 aa).

2 4Fe-4S ferredoxin-type domains span residues 50 to 80 (LSRD…LQKT) and 90 to 119 (EFFR…LTPD). 8 residues coordinate [4Fe-4S] cluster: C60, C63, C66, C70, C99, C102, C105, and C109.

The protein belongs to the complex I 23 kDa subunit family. As to quaternary structure, NDH-1 is composed of 14 different subunits. Subunits NuoA, H, J, K, L, M, N constitute the membrane sector of the complex. [4Fe-4S] cluster is required as a cofactor.

It is found in the cell inner membrane. It carries out the reaction a quinone + NADH + 5 H(+)(in) = a quinol + NAD(+) + 4 H(+)(out). In terms of biological role, NDH-1 shuttles electrons from NADH, via FMN and iron-sulfur (Fe-S) centers, to quinones in the respiratory chain. The immediate electron acceptor for the enzyme in this species is believed to be ubiquinone. Couples the redox reaction to proton translocation (for every two electrons transferred, four hydrogen ions are translocated across the cytoplasmic membrane), and thus conserves the redox energy in a proton gradient. This is NADH-quinone oxidoreductase subunit I 1 from Nitrosococcus oceani (strain ATCC 19707 / BCRC 17464 / JCM 30415 / NCIMB 11848 / C-107).